The primary structure comprises 342 residues: Nucleoid-associated protein Shewmr4_2217 (342 aa).

This sequence belongs to the YejK family.

The protein localises to the cytoplasm. It is found in the nucleoid. The polypeptide is Nucleoid-associated protein Shewmr4_2217 (Shewanella sp. (strain MR-4)).